Reading from the N-terminus, the 333-residue chain is Ribosomal RNA small subunit methyltransferase H (333 aa).

Residues glycine 36–tyrosine 38, aspartate 54, phenylalanine 81, aspartate 102, and glutamine 109 each bind S-adenosyl-L-methionine.

Belongs to the methyltransferase superfamily. RsmH family.

The protein resides in the cytoplasm. It carries out the reaction cytidine(1402) in 16S rRNA + S-adenosyl-L-methionine = N(4)-methylcytidine(1402) in 16S rRNA + S-adenosyl-L-homocysteine + H(+). In terms of biological role, specifically methylates the N4 position of cytidine in position 1402 (C1402) of 16S rRNA. The chain is Ribosomal RNA small subunit methyltransferase H from Afipia carboxidovorans (strain ATCC 49405 / DSM 1227 / KCTC 32145 / OM5) (Oligotropha carboxidovorans).